Here is a 125-residue protein sequence, read N- to C-terminus: Succinate dehydrogenase cytochrome b556 subunit (125 aa).

At 1-29 (MTKTKQEIYNKRPTSPHLTIYKPQISSTL) the chain is on the cytoplasmic side. Residues 30 to 55 (SILHRMTGVALFFAVSILAWWFILSK) traverse the membrane as a helical segment. Residues 56–68 (FDSNYIKLANCCC) are Periplasmic-facing. Residues 69-89 (IIKICLILTSFAWFYHLCNGI) traverse the membrane as a helical segment. H84 contributes to the heme binding site. Residues 90–104 (RHLFWDIGLGFSIKA) lie on the Cytoplasmic side of the membrane. The chain crosses the membrane as a helical span at residues 105-125 (VNLTGWSVVICSVLFTILLWV).

Belongs to the cytochrome b560 family. Part of an enzyme complex containing four subunits: a flavoprotein, an iron-sulfur protein, plus two membrane-anchoring proteins, SdhC and SdhD. The complex can form homotrimers. Requires heme as cofactor.

The protein resides in the cell inner membrane. Its pathway is carbohydrate metabolism; tricarboxylic acid cycle. Its function is as follows. Membrane-anchoring subunit of succinate dehydrogenase (SDH). In Rickettsia bellii (strain RML369-C), this protein is Succinate dehydrogenase cytochrome b556 subunit (sdhC).